Consider the following 294-residue polypeptide: Casein kinase II subunit beta (294 aa).

Disordered stretches follow at residues D66–N90 and K269–E294. The segment covering D70–S87 has biased composition (low complexity). The segment covering E273 to D288 has biased composition (acidic residues).

Belongs to the casein kinase 2 subunit beta family. As to quaternary structure, tetramer composed of two alpha chains, one beta chain and one beta' chain. Phosphorylated by alpha subunit.

Functionally, regulatory subunit of casein kinase II/CK2. As part of the kinase complex regulates the basal catalytic activity of the alpha subunit a constitutively active serine/threonine-protein kinase that phosphorylates a large number of substrates containing acidic residues C-terminal to the phosphorylated serine or threonine. This is Casein kinase II subunit beta (CKB1) from Candida albicans (Yeast).